Consider the following 398-residue polypeptide: Carbamoyl phosphate synthase small chain (398 aa).

The interval 1–207 (MIQTISSSRP…KGYGTNNVHN (207 aa)) is CPSase. L-glutamine is bound by residues Ser60, Gly257, and Gly259. Positions 209–397 (HIVAIDYGIK…CDLIMNHKKI (189 aa)) constitute a Glutamine amidotransferase type-1 domain. Cys286 acts as the Nucleophile in catalysis. The L-glutamine site is built by Leu287, Gln290, Asn328, Gly330, and Phe331. Residues His370 and Glu372 contribute to the active site.

The protein belongs to the CarA family. As to quaternary structure, composed of two chains; the small (or glutamine) chain promotes the hydrolysis of glutamine to ammonia, which is used by the large (or ammonia) chain to synthesize carbamoyl phosphate. Tetramer of heterodimers (alpha,beta)4.

It carries out the reaction hydrogencarbonate + L-glutamine + 2 ATP + H2O = carbamoyl phosphate + L-glutamate + 2 ADP + phosphate + 2 H(+). The enzyme catalyses L-glutamine + H2O = L-glutamate + NH4(+). Its pathway is amino-acid biosynthesis; L-arginine biosynthesis; carbamoyl phosphate from bicarbonate: step 1/1. It functions in the pathway pyrimidine metabolism; UMP biosynthesis via de novo pathway; (S)-dihydroorotate from bicarbonate: step 1/3. Small subunit of the glutamine-dependent carbamoyl phosphate synthetase (CPSase). CPSase catalyzes the formation of carbamoyl phosphate from the ammonia moiety of glutamine, carbonate, and phosphate donated by ATP, constituting the first step of 2 biosynthetic pathways, one leading to arginine and/or urea and the other to pyrimidine nucleotides. The small subunit (glutamine amidotransferase) binds and cleaves glutamine to supply the large subunit with the substrate ammonia. This Bartonella tribocorum (strain CIP 105476 / IBS 506) protein is Carbamoyl phosphate synthase small chain.